The chain runs to 215 residues: Cytochrome b6 (215 aa).

A helical transmembrane segment spans residues 32-52 (IFYCLGGVTLVCFIIQFATGF). Residue Cys35 participates in heme c binding. Heme b is bound by residues His86 and His100. 3 consecutive transmembrane segments (helical) span residues 90–110 (ASMMVLMMILHVFRVYLTGGF), 116–136 (LTWITGVVLAVITVTFGVTGY), and 186–206 (LHTFVLPWLIAVFMLLHFLMI). Residues His187 and His202 each coordinate heme b.

Belongs to the cytochrome b family. PetB subfamily. As to quaternary structure, the 4 large subunits of the cytochrome b6-f complex are cytochrome b6, subunit IV (17 kDa polypeptide, PetD), cytochrome f and the Rieske protein, while the 4 small subunits are PetG, PetL, PetM and PetN. The complex functions as a dimer. Heme b is required as a cofactor. The cofactor is heme c.

Its subcellular location is the cellular thylakoid membrane. Its function is as follows. Component of the cytochrome b6-f complex, which mediates electron transfer between photosystem II (PSII) and photosystem I (PSI), cyclic electron flow around PSI, and state transitions. The protein is Cytochrome b6 of Acaryochloris marina (strain MBIC 11017).